Here is a 257-residue protein sequence, read N- to C-terminus: Imidazole glycerol phosphate synthase subunit hisF1 (257 aa).

Residues Asp11 and Asp130 contribute to the active site.

This sequence belongs to the HisA/HisF family. In terms of assembly, heterodimer of HisH and HisF.

The protein resides in the cytoplasm. The catalysed reaction is 5-[(5-phospho-1-deoxy-D-ribulos-1-ylimino)methylamino]-1-(5-phospho-beta-D-ribosyl)imidazole-4-carboxamide + L-glutamine = D-erythro-1-(imidazol-4-yl)glycerol 3-phosphate + 5-amino-1-(5-phospho-beta-D-ribosyl)imidazole-4-carboxamide + L-glutamate + H(+). The protein operates within amino-acid biosynthesis; L-histidine biosynthesis; L-histidine from 5-phospho-alpha-D-ribose 1-diphosphate: step 5/9. Functionally, IGPS catalyzes the conversion of PRFAR and glutamine to IGP, AICAR and glutamate. The HisF subunit catalyzes the cyclization activity that produces IGP and AICAR from PRFAR using the ammonia provided by the HisH subunit. The chain is Imidazole glycerol phosphate synthase subunit hisF1 (hisF1) from Vibrio vulnificus (strain YJ016).